Reading from the N-terminus, the 382-residue chain is Lipid-A-disaccharide synthase (382 aa).

This sequence belongs to the LpxB family.

It carries out the reaction 2-N,3-O-bis[(3R)-3-hydroxytetradecanoyl]-alpha-D-glucosaminyl 1-phosphate + UDP-2-N,3-O-bis[(3R)-3-hydroxytetradecanoyl]-alpha-D-glucosamine = lipid A disaccharide (E. coli) + UDP + H(+). The catalysed reaction is a lipid X + a UDP-2-N,3-O-bis[(3R)-3-hydroxyacyl]-alpha-D-glucosamine = a lipid A disaccharide + UDP + H(+). Its pathway is glycolipid biosynthesis; lipid IV(A) biosynthesis; lipid IV(A) from (3R)-3-hydroxytetradecanoyl-[acyl-carrier-protein] and UDP-N-acetyl-alpha-D-glucosamine: step 5/6. Condensation of UDP-2,3-diacylglucosamine and 2,3-diacylglucosamine-1-phosphate to form lipid A disaccharide, a precursor of lipid A, a phosphorylated glycolipid that anchors the lipopolysaccharide to the outer membrane of the cell. This Serratia proteamaculans (strain 568) protein is Lipid-A-disaccharide synthase.